The chain runs to 689 residues: Elongation factor G (689 aa).

A tr-type G domain is found at 8–282 (LNTRNIGIMA…AVVDYLPSPI (275 aa)). Residues 17 to 24 (AHIDAGKT), 81 to 85 (DTPGH), and 135 to 138 (NKMD) each bind GTP.

The protein belongs to the TRAFAC class translation factor GTPase superfamily. Classic translation factor GTPase family. EF-G/EF-2 subfamily.

The protein resides in the cytoplasm. Functionally, catalyzes the GTP-dependent ribosomal translocation step during translation elongation. During this step, the ribosome changes from the pre-translocational (PRE) to the post-translocational (POST) state as the newly formed A-site-bound peptidyl-tRNA and P-site-bound deacylated tRNA move to the P and E sites, respectively. Catalyzes the coordinated movement of the two tRNA molecules, the mRNA and conformational changes in the ribosome. The protein is Elongation factor G of Mycoplasma capricolum subsp. capricolum (strain California kid / ATCC 27343 / NCTC 10154).